Reading from the N-terminus, the 269-residue chain is NAD kinase (269 aa).

Asp45 functions as the Proton acceptor in the catalytic mechanism. Residues 45–46 (DG), 122–123 (NE), Arg149, Asp151, and Ala186 each bind NAD(+).

This sequence belongs to the NAD kinase family. Requires a divalent metal cation as cofactor.

Its subcellular location is the cytoplasm. It catalyses the reaction NAD(+) + ATP = ADP + NADP(+) + H(+). Functionally, involved in the regulation of the intracellular balance of NAD and NADP, and is a key enzyme in the biosynthesis of NADP. Catalyzes specifically the phosphorylation on 2'-hydroxyl of the adenosine moiety of NAD to yield NADP. This chain is NAD kinase, found in Staphylococcus epidermidis (strain ATCC 35984 / DSM 28319 / BCRC 17069 / CCUG 31568 / BM 3577 / RP62A).